We begin with the raw amino-acid sequence, 121 residues long: Ribonuclease P protein component (121 aa).

Belongs to the RnpA family. As to quaternary structure, consists of a catalytic RNA component (M1 or rnpB) and a protein subunit.

The catalysed reaction is Endonucleolytic cleavage of RNA, removing 5'-extranucleotides from tRNA precursor.. Its function is as follows. RNaseP catalyzes the removal of the 5'-leader sequence from pre-tRNA to produce the mature 5'-terminus. It can also cleave other RNA substrates such as 4.5S RNA. The protein component plays an auxiliary but essential role in vivo by binding to the 5'-leader sequence and broadening the substrate specificity of the ribozyme. The polypeptide is Ribonuclease P protein component (Alcanivorax borkumensis (strain ATCC 700651 / DSM 11573 / NCIMB 13689 / SK2)).